An 874-amino-acid chain; its full sequence is Alanine--tRNA ligase (874 aa).

4 residues coordinate Zn(2+): histidine 562, histidine 566, cysteine 665, and histidine 669.

The protein belongs to the class-II aminoacyl-tRNA synthetase family. It depends on Zn(2+) as a cofactor.

It is found in the cytoplasm. The catalysed reaction is tRNA(Ala) + L-alanine + ATP = L-alanyl-tRNA(Ala) + AMP + diphosphate. In terms of biological role, catalyzes the attachment of alanine to tRNA(Ala) in a two-step reaction: alanine is first activated by ATP to form Ala-AMP and then transferred to the acceptor end of tRNA(Ala). Also edits incorrectly charged Ser-tRNA(Ala) and Gly-tRNA(Ala) via its editing domain. The polypeptide is Alanine--tRNA ligase (Pseudomonas fluorescens (strain Pf0-1)).